The following is a 421-amino-acid chain: Peptide chain release factor subunit 1 (421 aa).

It belongs to the eukaryotic release factor 1 family. In terms of assembly, heterodimer of two subunits, one of which binds GTP.

It is found in the cytoplasm. Directs the termination of nascent peptide synthesis (translation) in response to the termination codons UAA, UAG and UGA. The sequence is that of Peptide chain release factor subunit 1 (prf1) from Methanocaldococcus jannaschii (strain ATCC 43067 / DSM 2661 / JAL-1 / JCM 10045 / NBRC 100440) (Methanococcus jannaschii).